Consider the following 436-residue polypeptide: Two-pore potassium channel 3 (436 aa).

The Cytoplasmic portion of the chain corresponds to 1–148; it reads MANEGSDPLL…QKDPTETSRS (148 aa). The disordered stretch occupies residues 62–117; that stretch reads SHFIDSMKQPSPSSSSTAVNNPFSDSSTLDPLLPPPPPQPEPWLSDQTSSHCQGHA. Positions 71-92 are enriched in low complexity; the sequence is PSPSSSSTAVNNPFSDSSTLDP. Positions 93-102 are enriched in pro residues; sequence LLPPPPPQPE. Residues 149–169 form a helical membrane-spanning segment; the sequence is VVRQAFALLVVYLSLGVLIYW. Positions 185 to 204 form an intramembrane region, pore-forming; that stretch reads DGLYFCIVTMCTIGYGDITP. The chain crosses the membrane as a helical span at residues 212–232; that stretch reads FSIMFVLVGFGFIDILLSGMV. At 233-274 the chain is on the cytoplasmic side; sequence SYVLDLQESYMLDSAKRRDEPEKRRSYIIDVKKGRMRIRLKV. The helical transmembrane segment at 275–295 threads the bilayer; it reads ALALGVVVLCIAVGVGIMHFI. The segment at residues 302 to 321 is an intramembrane region (pore-forming); the sequence is DSFYLSVMSVTTVGYGDRAF. The chain crosses the membrane as a helical span at residues 328 to 348; that stretch reads LFAAIWLLVSTLAVARAFLYL. Residues 349–436 lie on the Cytoplasmic side of the membrane; it reads AEARVDKRNR…LDLLEGGSGD (88 aa). 2 consecutive EF-hand domains span residues 365-400 and 404-436; these read LCET…EMEK and KDIL…GSGD. The Ca(2+) site is built by Asp-378, Asp-380, Asn-382, Cys-384, Glu-389, Asp-417, Asn-421, Lys-423, and Asp-428.

Belongs to the two pore domain potassium channel (TC 1.A.1.7) family. As to quaternary structure, homodimer. Expressed in roots, cotyledons, stems, hypocotyls, leaves and flowers. Detected in root tips and in mesophyll cells and guard cells of the leaves.

It is found in the vacuole membrane. The protein localises to the plastid. It localises to the chloroplast thylakoid membrane. Inhibited by barium, but not by tetraethylammonium. Functionally, two-pore potassium channel modulating the proton motive force (pmf) necessary to convert photochemical energy into physiological functions. Mediates the potassium efflux from the thylakoid lumen required for the regulation of the transmembrane electrical potential, the enhancement of the pH gradient for ATP synthesis, the regulation of electron flow, and pH-mediated photoprotective responses. Requires calcium for channel activity. The sequence is that of Two-pore potassium channel 3 from Arabidopsis thaliana (Mouse-ear cress).